Consider the following 560-residue polypeptide: ATP synthase subunit beta, mitochondrial (560 aa).

A mitochondrion-targeting transit peptide spans 1 to 54 (MASRRLLASLLRQSAQRGGGLISRSLGNSIPKSASRASSRASPKGFLLNRAVQY). Disordered regions lie at residues 20 to 44 (GLIS…ASPK) and 58 to 81 (AAAP…KITD). 2 stretches are compositionally biased toward low complexity: residues 33–42 (SASRASSRAS) and 58–71 (AAAP…PPKS). ATP is bound at residue 235-242 (GGAGVGKT).

It belongs to the ATPase alpha/beta chains family. As to quaternary structure, F-type ATPases have 2 components, CF(1) - the catalytic core - and CF(0) - the membrane proton channel. CF(1) has five subunits: alpha(3), beta(3), gamma(1), delta(1), epsilon(1). CF(0) has three main subunits: a, b and c.

The protein resides in the mitochondrion. It localises to the mitochondrion inner membrane. It carries out the reaction ATP + H2O + 4 H(+)(in) = ADP + phosphate + 5 H(+)(out). Mitochondrial membrane ATP synthase (F(1)F(0) ATP synthase or Complex V) produces ATP from ADP in the presence of a proton gradient across the membrane which is generated by electron transport complexes of the respiratory chain. F-type ATPases consist of two structural domains, F(1) - containing the extramembraneous catalytic core, and F(0) - containing the membrane proton channel, linked together by a central stalk and a peripheral stalk. During catalysis, ATP synthesis in the catalytic domain of F(1) is coupled via a rotary mechanism of the central stalk subunits to proton translocation. Subunits alpha and beta form the catalytic core in F(1). Rotation of the central stalk against the surrounding alpha(3)beta(3) subunits leads to hydrolysis of ATP in three separate catalytic sites on the beta subunits. In Nicotiana plumbaginifolia (Leadwort-leaved tobacco), this protein is ATP synthase subunit beta, mitochondrial (ATPB).